The primary structure comprises 242 residues: Segregation and condensation protein A (242 aa).

The protein belongs to the ScpA family. As to quaternary structure, component of a cohesin-like complex composed of ScpA, ScpB and the Smc homodimer, in which ScpA and ScpB bind to the head domain of Smc. The presence of the three proteins is required for the association of the complex with DNA.

The protein resides in the cytoplasm. Participates in chromosomal partition during cell division. May act via the formation of a condensin-like complex containing Smc and ScpB that pull DNA away from mid-cell into both cell halves. The sequence is that of Segregation and condensation protein A from Streptococcus mitis.